Reading from the N-terminus, the 163-residue chain is Ribonuclease P protein subunit p25-like protein (163 aa).

Disordered stretches follow at residues 1–22 and 129–163; these read MEHY…PQLP and NECG…DTRS. Over residues 143 to 152 the composition is skewed to low complexity; that stretch reads GSMPSSSCGP. Over residues 153–163 the composition is skewed to basic residues; the sequence is RSRRRARDTRS.

This sequence belongs to the histone-like Alba family.

It localises to the nucleus. Its function is as follows. May be a component of ribonuclease P or MRP. The sequence is that of Ribonuclease P protein subunit p25-like protein (RPP25L) from Homo sapiens (Human).